A 1062-amino-acid chain; its full sequence is Roc-COR-CHAT protease (1062 aa).

LRR repeat units follow at residues 70-94, 95-116, 115-141, 142-159, 160-180, 181-203, 204-226, and 228-249; these read LAGL…HLQQ, LRLL…GSMP, MPLL…ALQK, LDVS…SACP, ALWW…MPAG, FKAL…NGKL, PKLV…LLLP, and GLET…IRGS. Residues 470–660 enclose the COR domain; it reads DWLGVMEELQ…GLMWKDNVVF (191 aa). A disordered region spans residues 836-856; sequence ERDNDHTGLSDSSDQEDETFT. Catalysis depends on residues His-931 and Cys-980.

In terms of biological role, a dedicated protease for substrate gasdermin bGSDM; cleaves the bGSDM precursor, releasing the pore-forming moiety, which integrates into the membrane and triggers cell death. Probably involved in defense against bacteriophages. Expression of bGSDM and this neighboring protease is highly toxic in E.coli. The sequence is that of Roc-COR-CHAT protease from Unknown prokaryotic organism.